A 257-amino-acid chain; its full sequence is uncharacterized protein (257 aa).

This is an uncharacterized protein from Acidianus bottle-shaped virus (isolate Italy/Pozzuoli) (ABV).